A 219-amino-acid chain; its full sequence is Small ribosomal subunit protein uS3 (219 aa).

One can recognise a KH type-2 domain in the interval 38-106 (IRKFIEKRLV…RVHINIVEIK (69 aa)).

This sequence belongs to the universal ribosomal protein uS3 family. In terms of assembly, part of the 30S ribosomal subunit. Forms a tight complex with proteins S10 and S14.

Functionally, binds the lower part of the 30S subunit head. Binds mRNA in the 70S ribosome, positioning it for translation. The sequence is that of Small ribosomal subunit protein uS3 from Levilactobacillus brevis (strain ATCC 367 / BCRC 12310 / CIP 105137 / JCM 1170 / LMG 11437 / NCIMB 947 / NCTC 947) (Lactobacillus brevis).